The chain runs to 519 residues: Ribonuclease Y (519 aa).

A helical membrane pass occupies residues 3 to 23 (PMTVLISILLTLLGLVVGYYV). A KH domain is found at 209–272 (TVSVVNLPND…ETARIALDKL (64 aa)). Residues 335 to 428 (VLKHSMEVAF…VAAADALSAA (94 aa)) enclose the HD domain.

It belongs to the RNase Y family.

Its subcellular location is the cell membrane. Endoribonuclease that initiates mRNA decay. This chain is Ribonuclease Y, found in Bacillus velezensis (strain DSM 23117 / BGSC 10A6 / LMG 26770 / FZB42) (Bacillus amyloliquefaciens subsp. plantarum).